The chain runs to 467 residues: Argininosuccinate lyase (467 aa).

The protein belongs to the lyase 1 family. Argininosuccinate lyase subfamily.

It localises to the cytoplasm. The catalysed reaction is 2-(N(omega)-L-arginino)succinate = fumarate + L-arginine. The protein operates within amino-acid biosynthesis; L-arginine biosynthesis; L-arginine from L-ornithine and carbamoyl phosphate: step 3/3. The sequence is that of Argininosuccinate lyase from Chromohalobacter salexigens (strain ATCC BAA-138 / DSM 3043 / CIP 106854 / NCIMB 13768 / 1H11).